A 113-amino-acid chain; its full sequence is Putative pterin-4-alpha-carbinolamine dehydratase (113 aa).

This sequence belongs to the pterin-4-alpha-carbinolamine dehydratase family.

It carries out the reaction (4aS,6R)-4a-hydroxy-L-erythro-5,6,7,8-tetrahydrobiopterin = (6R)-L-erythro-6,7-dihydrobiopterin + H2O. The protein is Putative pterin-4-alpha-carbinolamine dehydratase of Idiomarina loihiensis (strain ATCC BAA-735 / DSM 15497 / L2-TR).